Here is a 120-residue protein sequence, read N- to C-terminus: Glycine cleavage system H protein (120 aa).

In terms of domain architecture, Lipoyl-binding spans 20 to 102 (DGTVGISDHA…YEGGWLFKLD (83 aa)). The residue at position 61 (lysine 61) is an N6-lipoyllysine.

Belongs to the GcvH family. In terms of assembly, the glycine cleavage system is composed of four proteins: P, T, L and H. (R)-lipoate is required as a cofactor.

Its function is as follows. The glycine cleavage system catalyzes the degradation of glycine. The H protein shuttles the methylamine group of glycine from the P protein to the T protein. This chain is Glycine cleavage system H protein, found in Deinococcus radiodurans (strain ATCC 13939 / DSM 20539 / JCM 16871 / CCUG 27074 / LMG 4051 / NBRC 15346 / NCIMB 9279 / VKM B-1422 / R1).